The following is a 523-amino-acid chain: GMP synthase [glutamine-hydrolyzing] (523 aa).

Residues 8-205 (KILILDFGSQ…VVKICGCERN (198 aa)) enclose the Glutamine amidotransferase type-1 domain. The active-site Nucleophile is the Cys-85. Active-site residues include His-179 and Glu-181. Positions 206–398 (WTPENIIEDA…LGLPAEMLNR (193 aa)) constitute a GMPS ATP-PPase domain. 233-239 (SGGVDSS) contacts ATP.

In terms of assembly, homodimer.

The catalysed reaction is XMP + L-glutamine + ATP + H2O = GMP + L-glutamate + AMP + diphosphate + 2 H(+). It functions in the pathway purine metabolism; GMP biosynthesis; GMP from XMP (L-Gln route): step 1/1. Functionally, catalyzes the synthesis of GMP from XMP. This Pasteurella multocida (strain Pm70) protein is GMP synthase [glutamine-hydrolyzing].